Consider the following 403-residue polypeptide: 4,4'-dithiodibutanoate disulfide reductase (403 aa).

Gln-103 lines the FMN pocket. Catalysis depends on Tyr-173, which acts as the Proton donor. 348–349 provides a ligand contact to FMN; the sequence is AR.

Belongs to the NADH:flavin oxidoreductase/NADH oxidase family. The cofactor is FMN.

It carries out the reaction 2 4-sulfanylbutanoate + NAD(+) = 4,4'-disulfanyldibutanoate + NADH + H(+). Its activity is regulated as follows. Inactivated by cobalt, nickel and zinc ions. In terms of biological role, involved in the degradation of the organic disulfide 4,4'-dithiodibutyric acid (DTDB). Catalyzes the initial cleavage of DTDB into 2 molecules of 4-mercaptobutyric acid (4MB). Low activities are observed with other disulfide compounds, such as 3,3'-dithiodipropionic acid DTDP, 3,3'-thiodipropionic acid TDP and DTNB. The chain is 4,4'-dithiodibutanoate disulfide reductase from Rhodococcus erythropolis (Arthrobacter picolinophilus).